The following is a 365-amino-acid chain: 3-dehydroquinate synthase (365 aa).

NAD(+)-binding positions include 106–110 (GVIGD), 130–131 (TT), lysine 142, lysine 151, and 169–172 (FFAT). Residues glutamate 184, histidine 247, and histidine 264 each contribute to the Zn(2+) site.

It belongs to the sugar phosphate cyclases superfamily. Dehydroquinate synthase family. NAD(+) serves as cofactor. The cofactor is Co(2+). Zn(2+) is required as a cofactor.

Its subcellular location is the cytoplasm. The enzyme catalyses 7-phospho-2-dehydro-3-deoxy-D-arabino-heptonate = 3-dehydroquinate + phosphate. It participates in metabolic intermediate biosynthesis; chorismate biosynthesis; chorismate from D-erythrose 4-phosphate and phosphoenolpyruvate: step 2/7. In terms of biological role, catalyzes the conversion of 3-deoxy-D-arabino-heptulosonate 7-phosphate (DAHP) to dehydroquinate (DHQ). The chain is 3-dehydroquinate synthase from Listeria monocytogenes serovar 1/2a (strain ATCC BAA-679 / EGD-e).